A 207-amino-acid polypeptide reads, in one-letter code: MKIIHKGLVEYLPTFEAMKTFNAGRNADTEDELWVVEHPPVFTQGLAGKPEHLLIRDDIPVVQIDRGGQITYHGPGQLVVYTMIDFKRRKTSVRNIVSALENSIIATLAEYGIEAAADPKRPGIYVGERKIASLGLRIKNGSVYHGLALNVNMDLSPFTQINPCGYAGMEMTQIADFVQPCPAPDEVASKLTAHLETQLTPKADNNE.

The 177-residue stretch at 27–203 folds into the BPL/LPL catalytic domain; sequence ADTEDELWVV…HLETQLTPKA (177 aa). Substrate contacts are provided by residues 66 to 73, 133 to 135, and 146 to 148; these read RGGQITYH, SLG, and GLA. C164 functions as the Acyl-thioester intermediate in the catalytic mechanism.

Belongs to the LipB family.

Its subcellular location is the cytoplasm. The enzyme catalyses octanoyl-[ACP] + L-lysyl-[protein] = N(6)-octanoyl-L-lysyl-[protein] + holo-[ACP] + H(+). The protein operates within protein modification; protein lipoylation via endogenous pathway; protein N(6)-(lipoyl)lysine from octanoyl-[acyl-carrier-protein]: step 1/2. Functionally, catalyzes the transfer of endogenously produced octanoic acid from octanoyl-acyl-carrier-protein onto the lipoyl domains of lipoate-dependent enzymes. Lipoyl-ACP can also act as a substrate although octanoyl-ACP is likely to be the physiological substrate. The chain is Octanoyltransferase from Neisseria gonorrhoeae (strain ATCC 700825 / FA 1090).